The primary structure comprises 271 residues: Formamidopyrimidine-DNA glycosylase (271 aa).

The active-site Schiff-base intermediate with DNA is the P2. E3 (proton donor) is an active-site residue. The active-site Proton donor; for beta-elimination activity is K58. H91, R110, and R152 together coordinate DNA. The segment at 237–271 adopts an FPG-type zinc-finger fold; the sequence is QIYGRSAHPCPICGTPIRLERIGQRASYYCTQCQH. Residue R261 is the Proton donor; for delta-elimination activity of the active site.

The protein belongs to the FPG family. Monomer. Zn(2+) is required as a cofactor.

The enzyme catalyses Hydrolysis of DNA containing ring-opened 7-methylguanine residues, releasing 2,6-diamino-4-hydroxy-5-(N-methyl)formamidopyrimidine.. It catalyses the reaction 2'-deoxyribonucleotide-(2'-deoxyribose 5'-phosphate)-2'-deoxyribonucleotide-DNA = a 3'-end 2'-deoxyribonucleotide-(2,3-dehydro-2,3-deoxyribose 5'-phosphate)-DNA + a 5'-end 5'-phospho-2'-deoxyribonucleoside-DNA + H(+). Functionally, involved in base excision repair of DNA damaged by oxidation or by mutagenic agents. Acts as a DNA glycosylase that recognizes and removes damaged bases. Has a preference for oxidized purines, such as 7,8-dihydro-8-oxoguanine (8-oxoG). Has AP (apurinic/apyrimidinic) lyase activity and introduces nicks in the DNA strand. Cleaves the DNA backbone by beta-delta elimination to generate a single-strand break at the site of the removed base with both 3'- and 5'-phosphates. The polypeptide is Formamidopyrimidine-DNA glycosylase (Nitrosococcus oceani (strain ATCC 19707 / BCRC 17464 / JCM 30415 / NCIMB 11848 / C-107)).